The following is an 85-amino-acid chain: Alpha-mammal toxin AaH2 (85 aa).

The signal sequence occupies residues 1–19 (MNYLVMISLALLFVTGVES). Residues 21–83 (KDGYIVDDVN…VRTKGPGRCH (63 aa)) form the LCN-type CS-alpha/beta domain. Disulfide bonds link cysteine 31–cysteine 82, cysteine 35–cysteine 55, cysteine 41–cysteine 65, and cysteine 45–cysteine 67. At histidine 83 the chain carries Histidine amide.

It belongs to the long (4 C-C) scorpion toxin superfamily. Sodium channel inhibitor family. Alpha subfamily. Post-translationally, the amidation of His-83 is not necessary for toxicity. In terms of tissue distribution, expressed by the venom gland.

It is found in the secreted. Alpha toxin that binds voltage-independently at site-3 of sodium channels (Nav), inhibits the inactivation of the activated channels, and weakly inhibits activation, thereby blocking neuronal transmission. Inserts into voltage-sensing domain IV to stabilize a deactivated state, thereby preventing fast-inactivation. Principally slows the inactivation process of TTX-sensitive sodium channels. It is active on mammalian brain Nav1.2/SCN2A (EC(50)human=0.72 nM, EC(50)rat=2.6 nM), on rat skeletal muscle Nav1.4/SCN4A (EC(50)=2.2 nM), and on human neuronal Nav1.7/SCN9A (EC(50)=6.8-51.7 nM). In vivo, intraplantar injection into mice induces spontaneous pain responses. The protein is Alpha-mammal toxin AaH2 of Androctonus australis (Sahara scorpion).